We begin with the raw amino-acid sequence, 952 residues long: Glycine dehydrogenase (decarboxylating) (952 aa).

An N6-(pyridoxal phosphate)lysine modification is found at lysine 703.

Belongs to the GcvP family. As to quaternary structure, the glycine cleavage system is composed of four proteins: P, T, L and H. It depends on pyridoxal 5'-phosphate as a cofactor.

It catalyses the reaction N(6)-[(R)-lipoyl]-L-lysyl-[glycine-cleavage complex H protein] + glycine + H(+) = N(6)-[(R)-S(8)-aminomethyldihydrolipoyl]-L-lysyl-[glycine-cleavage complex H protein] + CO2. In terms of biological role, the glycine cleavage system catalyzes the degradation of glycine. The P protein binds the alpha-amino group of glycine through its pyridoxal phosphate cofactor; CO(2) is released and the remaining methylamine moiety is then transferred to the lipoamide cofactor of the H protein. This Mycolicibacterium gilvum (strain PYR-GCK) (Mycobacterium gilvum (strain PYR-GCK)) protein is Glycine dehydrogenase (decarboxylating).